The primary structure comprises 194 residues: Putative 3-methyladenine DNA glycosylase (194 aa).

Belongs to the DNA glycosylase MPG family.

This chain is Putative 3-methyladenine DNA glycosylase, found in Aeropyrum pernix (strain ATCC 700893 / DSM 11879 / JCM 9820 / NBRC 100138 / K1).